The following is a 577-amino-acid chain: Arginine--tRNA ligase (577 aa).

Residues 122-132 (PNVAKEMHVGH) carry the 'HIGH' region motif.

The protein belongs to the class-I aminoacyl-tRNA synthetase family. Monomer.

The protein localises to the cytoplasm. It catalyses the reaction tRNA(Arg) + L-arginine + ATP = L-arginyl-tRNA(Arg) + AMP + diphosphate. The chain is Arginine--tRNA ligase from Salmonella agona (strain SL483).